A 425-amino-acid polypeptide reads, in one-letter code: Glutamate-1-semialdehyde 2,1-aminomutase (425 aa).

N6-(pyridoxal phosphate)lysine is present on Lys-265.

Belongs to the class-III pyridoxal-phosphate-dependent aminotransferase family. HemL subfamily. In terms of assembly, homodimer. Pyridoxal 5'-phosphate serves as cofactor.

Its subcellular location is the cytoplasm. The enzyme catalyses (S)-4-amino-5-oxopentanoate = 5-aminolevulinate. It participates in porphyrin-containing compound metabolism; protoporphyrin-IX biosynthesis; 5-aminolevulinate from L-glutamyl-tRNA(Glu): step 2/2. The protein is Glutamate-1-semialdehyde 2,1-aminomutase of Opitutus terrae (strain DSM 11246 / JCM 15787 / PB90-1).